Consider the following 485-residue polypeptide: Outer membrane protein OprM (485 aa).

The signal sequence occupies residues 1-17 (MKRSFLSLAVAAVVLSG). A lipid anchor (N-palmitoyl cysteine) is attached at Cys-18. Cys-18 carries S-diacylglycerol cysteine lipidation.

It belongs to the outer membrane factor (OMF) (TC 1.B.17) family. Component of the MexAB-OprM multidrug efflux complex, composed of six MexA subunits forming a hexameric tube, binding to a MexB trimer, which interact with the trimeric OprM outer membrane channel protein. The OprM homotrimer forms a 135 Angstroms-long pore. It consists of a beta-barrel, which is probably inserted in the outer membrane, and an alpha-barrel formed by alpha-helices which probably spans the periplasm. In the ground state the periplasmic end is closed, while the outer membrane end opening is 6-8 Angstroms in diameter. OprM does not directly contact MexB; instead, MexA joins MexB and OprM by forming a funnel-like hexamer anchored to the inner membrane. MexA may initially form a hexameric ring complex with MexB prior to OprM, then OprM undergoes a conformational change as it contacts MexA, allowing the periplasmic gate to open. It is thought that, under high intracellular substrate concentration, MexB ejects substrate into the tunnel formed by MexA-OprM; as the substrate level declines, conformational changes in MexB cause efflux to reduce and stop and the complex shifts to the closed state. MexB subunit acts as a substrate:proton antiporter and activity is enhanced significantly when in complex with MexA and OprM, in vitro.

The protein resides in the cell outer membrane. Export of antibiotics and solvents is dramatically decreased in the presence of the protonophore carbonyl cyanide m-chlorophenylhydrazone (CCCP), therefore may be driven by a proton gradient. Antibiotic efflux is inhibited by pyridopyrimidine derivatives, such as ABI-PP, acting by binding to a hydrophobic pocket in MexB. In terms of biological role, the outer membrane component of the MexAB-OprM efflux system that confers multidrug resistance. Functions as the major efflux pump for n-hexane and p-xylene efflux. Has been shown in one study to be involved in the active efflux of the autoinducer N-(3-oxododecanoyl) homoserine lactone, thereby playing an indirect role in quorum-sensing; but has been shown in another study not to be involved in efflux of this autoinducer. Over-expression of the pump increases antibiotic and solvent efflux capacities. Can replace the OprJ outer membrane component of the MexCD-OprJ pump; the antibiotics exported are those exported by the intact MexCD pump, showing that efflux substrate specificity is not conferred by this component. Serves as the outer membrane component for the MexXY efflux system. Implicated in the secretion of the siderophore pyoverdine. OprM is probably involved in the efflux of the siderophore across the outer membrane. The chain is Outer membrane protein OprM (oprM) from Pseudomonas aeruginosa (strain ATCC 15692 / DSM 22644 / CIP 104116 / JCM 14847 / LMG 12228 / 1C / PRS 101 / PAO1).